A 623-amino-acid chain; its full sequence is DEAD-box ATP-dependent RNA helicase 52C (623 aa).

Residues 1–120 (MATPSRTSWA…DGDAAAGAGD (120 aa)) form a disordered region. Over residues 10–29 (ADVADADPAPAPAPAANGPA) the composition is skewed to low complexity. Positions 54-69 (APPPSSSSSSAPPPRA) are enriched in pro residues. A compositionally biased stretch (low complexity) spans 70–83 (APGLLAPRPAAAGM). Positions 84–97 (GRMGGGGGGGGFGG) are enriched in gly residues. Residues 155 to 183 (GTFAEIDLGQALNDNIRRCKYVRPTPVQR) carry the Q motif motif. The Helicase ATP-binding domain occupies 186-372 (IPISLAGRDL…SDFLENYIFL (187 aa)). Residue 199–206 (AQTGSGKT) participates in ATP binding. Residues 316-319 (DEAD) carry the DEAD box motif. Residues 399 to 550 (HLMDLLHAQR…EVPAWLSRYA (152 aa)) form the Helicase C-terminal domain. Residues 553–595 (PSYGGGGGRNRRSGGGSRFGGRDFRRDSSSGRGGGDYYGGGSS) form a disordered region. A compositionally biased stretch (gly residues) spans 555–571 (YGGGGGRNRRSGGGSRF). The span at 572–581 (GGRDFRRDSS) shows a compositional bias: basic and acidic residues. The segment covering 583-595 (GRGGGDYYGGGSS) has biased composition (gly residues).

The protein belongs to the DEAD box helicase family. DDX3/DED1 subfamily.

It catalyses the reaction ATP + H2O = ADP + phosphate + H(+). The chain is DEAD-box ATP-dependent RNA helicase 52C from Oryza sativa subsp. japonica (Rice).